Consider the following 385-residue polypeptide: Deoxyguanosinetriphosphate triphosphohydrolase-like protein (385 aa).

An HD domain is found at 62 to 197 (RLTHSLEVAQ…VSLADDIAYS (136 aa)).

The protein belongs to the dGTPase family. Type 2 subfamily.

The chain is Deoxyguanosinetriphosphate triphosphohydrolase-like protein from Neorickettsia sennetsu (strain ATCC VR-367 / Miyayama) (Ehrlichia sennetsu).